Consider the following 191-residue polypeptide: Large ribosomal subunit protein bL12cz (191 aa).

The transit peptide at 1–58 (MASTTLSIATTIRSSSYPTLASINHFPSRTTTIEFPSRFGGGSSSTLTHRATHLRPIA) directs the protein to the chloroplast.

The protein belongs to the bacterial ribosomal protein bL12 family.

It localises to the plastid. The protein resides in the chloroplast. The chain is Large ribosomal subunit protein bL12cz (RPL12A) from Arabidopsis thaliana (Mouse-ear cress).